The sequence spans 495 residues: Trigger factor (495 aa).

Residues 162-243 enclose the PPIase FKBP-type domain; sequence DDFVSIDLSA…VKSLKERELP (82 aa). The segment covering 425 to 437 has biased composition (basic and acidic residues); that stretch reads DTDGNEIDPKEYF. A disordered region spans residues 425–495; it reads DTDGNEIDPK…TDDDSENAEK (71 aa). Low complexity predominate over residues 450-461; sequence SADAEASENSEA. Residues 486–495 show a composition bias toward acidic residues; it reads TDDDSENAEK.

This sequence belongs to the FKBP-type PPIase family. Tig subfamily.

It localises to the cytoplasm. It catalyses the reaction [protein]-peptidylproline (omega=180) = [protein]-peptidylproline (omega=0). In terms of biological role, involved in protein export. Acts as a chaperone by maintaining the newly synthesized protein in an open conformation. Functions as a peptidyl-prolyl cis-trans isomerase. This chain is Trigger factor, found in Corynebacterium kroppenstedtii (strain DSM 44385 / JCM 11950 / CIP 105744 / CCUG 35717).